A 611-amino-acid chain; its full sequence is Chaperone protein DnaK (611 aa).

Thr173 carries the phosphothreonine; by autocatalysis modification. Residues 577 to 592 (QAAAGQAEGAQGAQDA) show a composition bias toward low complexity. Positions 577 to 611 (QAAAGQAEGAQGAQDAGTKKDNVVDAEFEEVKEDK) are disordered. Over residues 600 to 611 (VDAEFEEVKEDK) the composition is skewed to acidic residues.

This sequence belongs to the heat shock protein 70 family.

Acts as a chaperone. This Bacillus cereus (strain G9842) protein is Chaperone protein DnaK.